We begin with the raw amino-acid sequence, 409 residues long: Putative lipoate-protein ligase A (409 aa).

The BPL/LPL catalytic domain occupies 146 to 330 (GPDNCRLLFY…RFQKTFKVDG (185 aa)). Residues Arg-188, 193–196 (GTVL), and Lys-249 each bind ATP. Lys-249 lines the (R)-lipoate pocket.

This sequence belongs to the LplA family. Monomer.

The enzyme catalyses L-lysyl-[lipoyl-carrier protein] + (R)-lipoate + ATP = N(6)-[(R)-lipoyl]-L-lysyl-[lipoyl-carrier protein] + AMP + diphosphate + H(+). Its pathway is protein modification; protein lipoylation via exogenous pathway; protein N(6)-(lipoyl)lysine from lipoate: step 1/2. It functions in the pathway protein modification; protein lipoylation via exogenous pathway; protein N(6)-(lipoyl)lysine from lipoate: step 2/2. Catalyzes both the ATP-dependent activation of exogenously supplied lipoate to lipoyl-AMP and the transfer of the activated lipoyl onto the lipoyl domains of lipoate-dependent enzymes. The sequence is that of Putative lipoate-protein ligase A (AIM22) from Saccharomyces cerevisiae (strain ATCC 204508 / S288c) (Baker's yeast).